Here is a 294-residue protein sequence, read N- to C-terminus: Large ribosomal subunit protein uL18 (294 aa).

A disordered region spans residues 247-275; it reads RADPSPSAKKAAKPSKRHTAKRLTYDERK. The segment covering 256–267 has biased composition (basic residues); that stretch reads KAAKPSKRHTAK.

This sequence belongs to the universal ribosomal protein uL18 family. Component of the large ribosomal subunit (LSU).

It is found in the cytoplasm. The protein localises to the nucleus. Functionally, component of the ribosome, a large ribonucleoprotein complex responsible for the synthesis of proteins in the cell. The small ribosomal subunit (SSU) binds messenger RNAs (mRNAs) and translates the encoded message by selecting cognate aminoacyl-transfer RNA (tRNA) molecules. The large subunit (LSU) contains the ribosomal catalytic site termed the peptidyl transferase center (PTC), which catalyzes the formation of peptide bonds, thereby polymerizing the amino acids delivered by tRNAs into a polypeptide chain. The nascent polypeptides leave the ribosome through a tunnel in the LSU and interact with protein factors that function in enzymatic processing, targeting, and the membrane insertion of nascent chains at the exit of the ribosomal tunnel. This chain is Large ribosomal subunit protein uL18 (rpl-5), found in Caenorhabditis briggsae.